The primary structure comprises 863 residues: Oleate activated transcription factor 3 (863 aa).

The zn(2)-C6 fungal-type DNA-binding region spans 19–47; the sequence is CTNCKKRKSKCDRTKPCGTCVRLGDVDSC. Over residues 52–63 the composition is skewed to polar residues; sequence DSSGQPESSPSL. The interval 52 to 81 is disordered; the sequence is DSSGQPESSPSLNDADPLRKQSTPAERISP.

It belongs to the OAF3 family.

The protein localises to the cytoplasm. Its subcellular location is the nucleus. The protein resides in the mitochondrion. In terms of biological role, transcriptional inhibitor with a significantly increased number of target genes in response to oleate. The protein is Oleate activated transcription factor 3 (OAF3) of Saccharomyces cerevisiae (strain RM11-1a) (Baker's yeast).